Consider the following 163-residue polypeptide: 3-isopropylmalate dehydratase small subunit (163 aa).

The protein belongs to the LeuD family. LeuD type 2 subfamily. Heterodimer of LeuC and LeuD.

The catalysed reaction is (2R,3S)-3-isopropylmalate = (2S)-2-isopropylmalate. It functions in the pathway amino-acid biosynthesis; L-leucine biosynthesis; L-leucine from 3-methyl-2-oxobutanoate: step 2/4. In terms of biological role, catalyzes the isomerization between 2-isopropylmalate and 3-isopropylmalate, via the formation of 2-isopropylmaleate. The chain is 3-isopropylmalate dehydratase small subunit from Clostridioides difficile (strain 630) (Peptoclostridium difficile).